The chain runs to 49 residues: Feruloyl esterase A (49 aa).

This sequence belongs to the AB hydrolase superfamily. FaeA family.

It is found in the secreted. It catalyses the reaction feruloyl-polysaccharide + H2O = ferulate + polysaccharide.. Functionally, involved in degradation of plant cell walls. Hydrolyzes the feruloyl-arabinose ester bond in arabinoxylans as well as the feruloyl-galactose and feruloyl-arabinose ester bonds in pectin. Active against methyl esters of sinapate (MSA), but not caffeate (MCA). The sequence is that of Feruloyl esterase A from Talaromyces stipitatus (strain ATCC 10500 / CBS 375.48 / QM 6759 / NRRL 1006) (Penicillium stipitatum).